A 416-amino-acid chain; its full sequence is Tyrosine--tRNA ligase (416 aa).

Tyr41 contacts L-tyrosine. The 'HIGH' region motif lies at 46–55 (ATASSLHAGH). 2 residues coordinate L-tyrosine: Tyr175 and Gln179. Residues 235 to 239 (KMGKT) carry the 'KMSKS' region motif. Residue Lys238 participates in ATP binding. Positions 349–416 (LPVAKAFVDA…KKKHVLLKPV (68 aa)) constitute an S4 RNA-binding domain.

The protein belongs to the class-I aminoacyl-tRNA synthetase family. TyrS type 1 subfamily. As to quaternary structure, homodimer.

The protein resides in the cytoplasm. It carries out the reaction tRNA(Tyr) + L-tyrosine + ATP = L-tyrosyl-tRNA(Tyr) + AMP + diphosphate + H(+). In terms of biological role, catalyzes the attachment of tyrosine to tRNA(Tyr) in a two-step reaction: tyrosine is first activated by ATP to form Tyr-AMP and then transferred to the acceptor end of tRNA(Tyr). The polypeptide is Tyrosine--tRNA ligase (Xanthobacter autotrophicus (strain ATCC BAA-1158 / Py2)).